We begin with the raw amino-acid sequence, 109 residues long: T cell receptor alpha variable 26-1 (109 aa).

An N-terminal signal peptide occupies residues 1 to 19; sequence MRLVARVTVFLTFGTIIDA. The Ig-like domain occupies 20–109; sequence KTTQPTSMDC…TAVYYCIVRV (90 aa). Cys-39 and Cys-105 are disulfide-bonded. N-linked (GlcNAc...) asparagine glycosylation is found at Asn-40 and Asn-71.

In terms of assembly, alpha-beta TR is a heterodimer composed of an alpha and beta chain; disulfide-linked. The alpha-beta TR is associated with the transmembrane signaling CD3 coreceptor proteins to form the TR-CD3 (TcR or TCR). The assembly of alpha-beta TR heterodimers with CD3 occurs in the endoplasmic reticulum where a single alpha-beta TR heterodimer associates with one CD3D-CD3E heterodimer, one CD3G-CD3E heterodimer and one CD247 homodimer forming a stable octameric structure. CD3D-CD3E and CD3G-CD3E heterodimers preferentially associate with TR alpha and TR beta chains, respectively. The association of the CD247 homodimer is the last step of TcR assembly in the endoplasmic reticulum and is required for transport to the cell surface.

It is found in the cell membrane. Functionally, v region of the variable domain of T cell receptor (TR) alpha chain that participates in the antigen recognition. Alpha-beta T cell receptors are antigen specific receptors which are essential to the immune response and are present on the cell surface of T lymphocytes. Recognize peptide-major histocompatibility (MH) (pMH) complexes that are displayed by antigen presenting cells (APC), a prerequisite for efficient T cell adaptive immunity against pathogens. Binding of alpha-beta TR to pMH complex initiates TR-CD3 clustering on the cell surface and intracellular activation of LCK that phosphorylates the ITAM motifs of CD3G, CD3D, CD3E and CD247 enabling the recruitment of ZAP70. In turn ZAP70 phosphorylates LAT, which recruits numerous signaling molecules to form the LAT signalosome. The LAT signalosome propagates signal branching to three major signaling pathways, the calcium, the mitogen-activated protein kinase (MAPK) kinase and the nuclear factor NF-kappa-B (NF-kB) pathways, leading to the mobilization of transcription factors that are critical for gene expression and essential for T cell growth and differentiation. The T cell repertoire is generated in the thymus, by V-(D)-J rearrangement. This repertoire is then shaped by intrathymic selection events to generate a peripheral T cell pool of self-MH restricted, non-autoaggressive T cells. Post-thymic interaction of alpha-beta TR with the pMH complexes shapes TR structural and functional avidity. This Homo sapiens (Human) protein is T cell receptor alpha variable 26-1.